The sequence spans 214 residues: Phosphoribosylglycinamide formyltransferase (214 aa).

N(1)-(5-phospho-beta-D-ribosyl)glycinamide is bound at residue 12–14; it reads GSN. (6R)-10-formyltetrahydrofolate-binding positions include 105–108 and asparagine 123; that span reads LLIL. Catalysis depends on histidine 125, which acts as the Proton donor. A (6R)-10-formyltetrahydrofolate-binding site is contributed by aspartate 167. Residue glutamate 197 participates in N(1)-(5-phospho-beta-D-ribosyl)glycinamide binding.

This sequence belongs to the GART family.

The enzyme catalyses N(1)-(5-phospho-beta-D-ribosyl)glycinamide + (6R)-10-formyltetrahydrofolate = N(2)-formyl-N(1)-(5-phospho-beta-D-ribosyl)glycinamide + (6S)-5,6,7,8-tetrahydrofolate + H(+). It functions in the pathway purine metabolism; IMP biosynthesis via de novo pathway; N(2)-formyl-N(1)-(5-phospho-D-ribosyl)glycinamide from N(1)-(5-phospho-D-ribosyl)glycinamide (10-formyl THF route): step 1/1. This is Phosphoribosylglycinamide formyltransferase from Saccharomyces cerevisiae (strain ATCC 204508 / S288c) (Baker's yeast).